The sequence spans 625 residues: Somatic embryogenesis receptor kinase 1 (625 aa).

Residues 1–26 (MESSYVVFILLSLILLPNHSLWLASA) form the signal peptide. Residues 27-238 (NLEGDALHTL…STPSGYGITG (212 aa)) lie on the Extracellular side of the membrane. A disulfide bridge connects residues C58 and C65. Leucine-rich repeat receptor-like protein kinase binding stretches follow at residues 59–78 (TWFHVTCNNENSVIRVDLGN) and 97–102 (YLELYS). 61 to 62 (FH) is a brassinolide binding site. LRR repeat units lie at residues 92 to 116 (LKNLQYLELYSNNITGPIPSNLGNL), 118 to 140 (NLVSLDLYLNSFSGPIPESLGKL), 141 to 164 (SKLRFLRLNNNSLTGSIPMSLTNI), and 165 to 189 (TTLQVLDLSNNRLSGSVPDNGSFSL). N-linked (GlcNAc...) asparagine glycosylation is found at N104 and N115. 2 leucine-rich repeat receptor-like protein kinase binding regions span residues 123 to 126 (DLYL) and 145 to 147 (FLR). Residues N150, N163, and N184 are each glycosylated (N-linked (GlcNAc...) asparagine). A leucine-rich repeat receptor-like protein kinase binding region spans residues 171–194 (DLSNNRLSGSVPDNGSFSLFTPIS). The cysteines at positions 202 and 210 are disulfide-linked. A helical membrane pass occupies residues 239–259 (AIAGGVAAGAALLFAAPAIAF). The Cytoplasmic segment spans residues 260–625 (AWWRRRKPLD…LHAVELSGPR (366 aa)). Phosphoserine occurs at positions 291, 299, and 303. A Protein kinase domain is found at 302 to 589 (FSNKNILGRG…GLAEKWDEWQ (288 aa)). 308–316 (LGRGGFGKV) provides a ligand contact to ATP. A Phosphothreonine modification is found at T325. K330 serves as a coordination point for ATP. Residues T337 and T346 each carry the phosphothreonine modification. Phosphoserine occurs at positions 352, 383, 386, and 394. The residue at position 402 (T402) is a Phosphothreonine. The residue at position 415 (S415) is a Phosphoserine. D429 serves as the catalytic Proton acceptor. A Phosphotyrosine modification is found at Y456. 4 positions are modified to phosphothreonine: T459, T462, T463, and T468. Y476 bears the Phosphotyrosine mark. S478 bears the Phosphoserine mark. Residue T479 is modified to Phosphothreonine. S483 carries the post-translational modification Phosphoserine. T541 is subject to Phosphothreonine. Y543 carries the phosphotyrosine modification. T559 is modified (phosphothreonine). Phosphoserine is present on residues S606 and S612. At T613 the chain carries Phosphothreonine. Y614 carries the phosphotyrosine modification. Position 622 is a phosphoserine (S622).

The protein belongs to the protein kinase superfamily. Ser/Thr protein kinase family. In terms of assembly, monomer, homo- and heterodimer. Interacts with KAPP, CDC48A, GRF6 or GRF7, SERK2, BRI1 and SERK3/BAK1 to form the SERK1 signaling complex. Bind to BRI1 in a brassinolide-dependent manner. Heterodimer with PSKR1. Interacts with the EF-Tu receptor EFR and FLS2 in a specific ligand-induced manner. Interacts with ERECTA in a EPF2-induced manner. Interacts with ERL1 in a EPF1-induced manner. Interacts with TMM. In the presence of the signal peptide RGF1, interacts with RGI1/RGFR4/RCH2, RGI2/RGFR3/RCH1, RGI3/RGFR1, RGI4/RGFR2/SKM2 and RGI5/RGFR5. Mg(2+) serves as cofactor. Glycosylated. Important for targeting to the plasma membrane. Post-translationally, intermolecular autophosphorylation. The catalytic activity of SERK1 depends on the presence of a phosphorylated Thr residue in SERK1. The phosphorylation is induced by brassinosteroids. Transphosphorylation by BRI1 occurs only on Ser-299 and Thr-462. Dephosphorylation of threonine residues by the kinase-associated protein phosphatase (KAPP) is involved in SERK1 endocytosis. Expressed in flowers, tapetum, developing microspores, all cells of the embryo sac, provascular strands and developing vascular bundles. Low expression in adult vascular tissue. Detected in root meristem.

Its subcellular location is the cell membrane. The protein localises to the endoplasmic reticulum membrane. The catalysed reaction is L-seryl-[protein] + ATP = O-phospho-L-seryl-[protein] + ADP + H(+). The enzyme catalyses L-threonyl-[protein] + ATP = O-phospho-L-threonyl-[protein] + ADP + H(+). It carries out the reaction L-tyrosyl-[protein] + ATP = O-phospho-L-tyrosyl-[protein] + ADP + H(+). Inhibited by manganese. Functionally, dual specificity kinase acting on both serine/threonine- and tyrosine-containing substrates. Phosphorylates BRI1 on 'Ser-887' and CDC48 on at least one threonine residue and on 'Ser-41'. Confers embryogenic competence. Acts redundantly with SERK2 as a control point for sporophytic development controlling male gametophyte production. Involved in the brassinolide signaling pathway. Probably required during small peptide (e.g. RGF1) signaling. Involved in the perception of phytosulfokine and subsequent signal transduction. Acts as a RLK5 coreceptor and promotes high-affinity IDA sensing, thus being a positive regulator of floral abscission. The polypeptide is Somatic embryogenesis receptor kinase 1 (Arabidopsis thaliana (Mouse-ear cress)).